The primary structure comprises 322 residues: MARCFSLVLLLTSIWTTRLLVQGSLRAEELSIQVSCRIMGITLVSKKANQQLNFTEAKEACRLLGLSLAGKDQVETALKASFETCSYGWVGDGFVVISRISPNPKCGKNGVGVLIWKVPVSRQFAAYCYNSSDTWTNSCIPEIITTKDPIFNTQTATQTTEFIVSDSTYSVASPYSTIPAPTTTPPAPASTSIPRRKKLICVTEVFMETSTMSTETEPFVENKAAFKNEAAGFGGVPTALLVLALLFFGAAAGLGFCYVKRYVKAFPFTNKNQQKEMIETKVVKEEKANDSNPNEESKKTDKNPEESKSPSKTTVRCLEAEV.

A signal peptide spans 1–19 (MARCFSLVLLLTSIWTTRL). Residues 20–238 (LVQGSLRAEE…EAAGFGGVPT (219 aa)) lie on the Extracellular side of the membrane. The Link domain occupies 40–130 (GITLVSKKAN…SRQFAAYCYN (91 aa)). N53 carries N-linked (GlcNAc...) asparagine glycosylation. Disulfide bonds link C61-C128 and C85-C106. An N-linked (GlcNAc...) asparagine glycan is attached at N130. Residues 239–259 (ALLVLALLFFGAAAGLGFCYV) traverse the membrane as a helical segment. Residues 260 to 322 (KRYVKAFPFT…TTVRCLEAEV (63 aa)) are Cytoplasmic-facing. Over residues 279–309 (ETKVVKEEKANDSNPNEESKKTDKNPEESKS) the composition is skewed to basic and acidic residues. The tract at residues 279–322 (ETKVVKEEKANDSNPNEESKKTDKNPEESKSPSKTTVRCLEAEV) is disordered.

Homodimer; disulfide-linked. Interacts with PDGFB and IGFBP3. Forms a transient ternary complex with PDGFB and PDGFRB in TGN. In terms of processing, O-glycosylated. In terms of tissue distribution, mainly expressed in endothelial cells lining lymphatic vessels.

The protein localises to the cell membrane. Functionally, ligand-specific transporter trafficking between intracellular organelles (TGN) and the plasma membrane. Plays a role in autocrine regulation of cell growth mediated by growth regulators containing cell surface retention sequence binding (CRS). May act as a hyaluronan (HA) transporter, either mediating its uptake for catabolism within lymphatic endothelial cells themselves, or its transport into the lumen of afferent lymphatic vessels for subsequent re-uptake and degradation in lymph nodes. Binds to pericelluar hyaluronan matrices deposited on the surface of leukocytes and facilitates cell adhesion and migration through lymphatic endothelium. This chain is Lymphatic vessel endothelial hyaluronic acid receptor 1 (LYVE1), found in Homo sapiens (Human).